Reading from the N-terminus, the 156-residue chain is Small ribosomal subunit protein uS7 (156 aa).

This sequence belongs to the universal ribosomal protein uS7 family. As to quaternary structure, part of the 30S ribosomal subunit. Contacts proteins S9 and S11.

One of the primary rRNA binding proteins, it binds directly to 16S rRNA where it nucleates assembly of the head domain of the 30S subunit. Is located at the subunit interface close to the decoding center, probably blocks exit of the E-site tRNA. This Rhizobium rhizogenes (strain K84 / ATCC BAA-868) (Agrobacterium radiobacter) protein is Small ribosomal subunit protein uS7.